Reading from the N-terminus, the 335-residue chain is MWQLLATLSCLLVLTSARSSLHFPPLSDEMVNYVNKQNTTWKAGHNFYNVDLSYVKKLCGAILGGPKLPQRDAFAADMVLPDSFDAREQWPNCPTIKEIRDQGSCGSCWAFGAVEAISDRICIHSKGRVNVEVSAEDMLTCCGSECGDGCNGGFPSGAWNFWTKKGLVSGGLYDSHVGCRPYSIPPCEHHVNGSRPPCTGEGDTPKCSKICEPGYSPSYKDDKHFGCSSYSVSSNEKEIMAEIYKNGPVEGAFSVYSDFLLYKSGVYQHVSGEMMGGHAIRILGWGVENDTPYWLVGNSWNTDWGDKGFFKILRGQDHCGIESEIVAGMPCAHQH.

The signal sequence occupies residues 1–19 (MWQLLATLSCLLVLTSARS). The propeptide at 20–79 (SLHFPPLSDEMVNYVNKQNTTWKAGHNFYNVDLSYVKKLCGAILGGPKLPQRDAFAADMV) is activation peptide. Intrachain disulfides connect C93/C122, C105/C150, C141/C207, C142/C146, C179/C211, and C187/C198. C108 is an active-site residue. An N-linked (GlcNAc...) asparagine glycan is attached at N192. An N6-acetyllysine modification is found at K220. Active-site residues include H278 and N298. Positions 333–335 (HQH) are excised as a propeptide.

It belongs to the peptidase C1 family. As to quaternary structure, dimer of a heavy chain and a light chain cross-linked by a disulfide bond. Interacts with SRPX2. Directly interacts with SHKBP1.

It localises to the lysosome. It is found in the melanosome. The protein resides in the secreted. Its subcellular location is the extracellular space. The protein localises to the apical cell membrane. It catalyses the reaction Hydrolysis of proteins with broad specificity for peptide bonds. Preferentially cleaves -Arg-Arg-|-Xaa bonds in small molecule substrates (thus differing from cathepsin L). In addition to being an endopeptidase, shows peptidyl-dipeptidase activity, liberating C-terminal dipeptides.. In terms of biological role, thiol protease which is believed to participate in intracellular degradation and turnover of proteins. Cleaves matrix extracellular phosphoglycoprotein MEPE. Involved in the solubilization of cross-linked TG/thyroglobulin in the thyroid follicle lumen. Has also been implicated in tumor invasion and metastasis. The sequence is that of Cathepsin B (CTSB) from Ovis aries (Sheep).